Here is a 495-residue protein sequence, read N- to C-terminus: Glutamyl-tRNA(Gln) amidotransferase subunit A (495 aa).

Catalysis depends on charge relay system residues K78 and S158. Catalysis depends on S182, which acts as the Acyl-ester intermediate.

It belongs to the amidase family. GatA subfamily. As to quaternary structure, heterotrimer of A, B and C subunits.

It catalyses the reaction L-glutamyl-tRNA(Gln) + L-glutamine + ATP + H2O = L-glutaminyl-tRNA(Gln) + L-glutamate + ADP + phosphate + H(+). Its function is as follows. Allows the formation of correctly charged Gln-tRNA(Gln) through the transamidation of misacylated Glu-tRNA(Gln) in organisms which lack glutaminyl-tRNA synthetase. The reaction takes place in the presence of glutamine and ATP through an activated gamma-phospho-Glu-tRNA(Gln). The protein is Glutamyl-tRNA(Gln) amidotransferase subunit A of Ruegeria sp. (strain TM1040) (Silicibacter sp.).